The primary structure comprises 300 residues: 33 kDa chaperonin (300 aa).

Cystine bridges form between cysteine 235-cysteine 237 and cysteine 269-cysteine 272.

Belongs to the HSP33 family. In terms of processing, under oxidizing conditions two disulfide bonds are formed involving the reactive cysteines. Under reducing conditions zinc is bound to the reactive cysteines and the protein is inactive.

It localises to the cytoplasm. Redox regulated molecular chaperone. Protects both thermally unfolding and oxidatively damaged proteins from irreversible aggregation. Plays an important role in the bacterial defense system toward oxidative stress. This Pseudomonas fluorescens (strain ATCC BAA-477 / NRRL B-23932 / Pf-5) protein is 33 kDa chaperonin.